A 920-amino-acid chain; its full sequence is Translation initiation factor IF-2 (920 aa).

Composition is skewed to basic and acidic residues over residues 149 to 175 (EAEMKAAEEARQKEVAAPVVEKEEKPV), 186 to 197 (AEKKATADKAAK), and 255 to 265 (AKPEGADDKKK). Disordered stretches follow at residues 149 to 197 (EAEM…KAAK) and 245 to 319 (EAKK…KQRQ). Residues 301-311 (SSGGVGGWRSG) show a composition bias toward gly residues. The 168-residue stretch at 418–585 (PRPPVVTVMG…NVLLQAEILE (168 aa)) folds into the tr-type G domain. A G1 region spans residues 427-434 (GHVDHGKT). GTP is bound at residue 427-434 (GHVDHGKT). The segment at 452 to 456 (GITQH) is G2. The interval 473 to 476 (DTPG) is G3. Residues 473-477 (DTPGH) and 527-530 (NKID) contribute to the GTP site. Positions 527–530 (NKID) are G4. The interval 563-565 (SAK) is G5.

This sequence belongs to the TRAFAC class translation factor GTPase superfamily. Classic translation factor GTPase family. IF-2 subfamily.

The protein localises to the cytoplasm. Functionally, one of the essential components for the initiation of protein synthesis. Protects formylmethionyl-tRNA from spontaneous hydrolysis and promotes its binding to the 30S ribosomal subunits. Also involved in the hydrolysis of GTP during the formation of the 70S ribosomal complex. This chain is Translation initiation factor IF-2, found in Polynucleobacter asymbioticus (strain DSM 18221 / CIP 109841 / QLW-P1DMWA-1) (Polynucleobacter necessarius subsp. asymbioticus).